A 254-amino-acid polypeptide reads, in one-letter code: MAIANKNIIFVAGLGGIGLDTSREIVKSGPKNLVILDRIDNPAAIAELKAINPKVTVTFYPYDVTVSVAESTKLLKVIFDKLKTVDLLINGAGILDDYQIERTIAVNFAGTVNTTTAIMAFWDKRKGGPGGVIANICSVTGFNAIYQVPVYSASKAAALSFTNSLAKLAPITGVTAYSINPGITKTTLVHKFNSWLDVEPRVAELLLEHPTQTSLQCAQNFVKAIEANQNGAIWKLDLGRLEAIEWTKHWDSGI.

10 to 33 lines the NAD(+) pocket; that stretch reads FVAGLGGIGLDTSREIVKSGPKNL. S138 serves as a coordination point for substrate. Y151 functions as the Proton acceptor in the catalytic mechanism.

The protein belongs to the short-chain dehydrogenases/reductases (SDR) family. In terms of assembly, homodimer.

It carries out the reaction a primary alcohol + NAD(+) = an aldehyde + NADH + H(+). It catalyses the reaction a secondary alcohol + NAD(+) = a ketone + NADH + H(+). This chain is Alcohol dehydrogenase 1 (Adh1), found in Drosophila hydei (Fruit fly).